The chain runs to 1106 residues: Communication mutant protein F (1106 aa).

A signal peptide spans 1–28 (MKIYKKNHFLKILIIFIYLSCNILKVNA). In terms of domain architecture, G8 spans 254 to 380 (TIWPNGVVPS…YHNTWSKLAS (127 aa)). N-linked (GlcNAc...) asparagine glycosylation is found at N267, N306, N512, N536, N677, N715, and N833.

The protein belongs to the comF family.

It is found in the secreted. The polypeptide is Communication mutant protein F (comF-1) (Dictyostelium discoideum (Social amoeba)).